Consider the following 121-residue polypeptide: NADH-quinone oxidoreductase subunit 7 (121 aa).

3 helical membrane passes run 11 to 31, 65 to 85, and 93 to 113; these read ILVFLGMASALAIVLILAAAV, LVSILFIIFDLEVAFLFPWAV, and VAFWGLMVFLAVLTVGFAYEW.

This sequence belongs to the complex I subunit 3 family. NDH-1 is composed of at least 14 different subunits, Nqo1 to Nqo14. The complex has a L-shaped structure, with the hydrophobic arm (subunits Nqo7, Nqo8, Nqo10 to Nqo14) embedded in the inner membrane and the hydrophilic peripheral arm (subunits Nqo1 to Nqo6, Nqo9) protruding into the bacterial cytoplasm. The hydrophilic domain contains all the redox centers.

The protein localises to the cell inner membrane. It carries out the reaction a quinone + NADH + 5 H(+)(in) = a quinol + NAD(+) + 4 H(+)(out). Its function is as follows. NDH-1 shuttles electrons from NADH, via FMN and iron-sulfur (Fe-S) centers, to quinones in the respiratory chain. The immediate electron acceptor for the enzyme in this species is believed to be ubiquinone. Couples the redox reaction to proton translocation (for every two electrons transferred, four hydrogen ions are translocated across the cytoplasmic membrane), and thus conserves the redox energy in a proton gradient. The protein is NADH-quinone oxidoreductase subunit 7 (nqo7) of Paracoccus denitrificans.